The primary structure comprises 241 residues: MESLDFTKAPPEFQEVKYLSDILLVTLASGWLVCYFATIRTAFCDRACWMPLLPLSCNVAWELVFITLYPPPGSPILGFWLLVNLGVIYSALRFAPSKASHLAVEKHYLPVLFVLAVGFWAWGHLALIEQLNPLPAFYYGGMACQLMTSAAALSGLVDQGSTQGASYTIWLSRVIGTSSALAGLFFRAHYWPSLWAWADNELMRWLAAAFGILDGVYGVQFWRLRRSENQLTIDHAHRKTE.

7 helical membrane-spanning segments follow: residues 19–39 (LSDI…FATI), 49–71 (WMPL…LYPP), 76–95 (ILGF…LRFA), 108–128 (YLPV…LALI), 137–157 (FYYG…SGLV), 166–186 (SYTI…GLFF), and 202–222 (LMRW…VQFW).

Belongs to the paxB family.

It is found in the membrane. It participates in secondary metabolite biosynthesis; terpenoid biosynthesis. Functionally, terpene cyclase; part of the gene cluster that mediates the biosynthesis of 15-deoxyoxalicine B. The first step of the pathway is the synthesis of nicotinyl-CoA from nicotinic acid by the nicotinic acid-CoA ligase olcI. Nicotinyl-CoA is then a substrate of polyketide synthase olcA to produce 4-hydroxy-6-(3-pyridinyl)-2H-pyran-2-one (HPPO) which is further prenylated by the polyprenyl transferase olcH to yield geranylgeranyl-HPPO. Geranylgeranyl pyrophosphate is provided by the cluster-specific geranylgeranyl pyrophosphate synthase olcC. The FAD-dependent monooxygenase olcE catalyzes the epoxidation of geranylgeranyl-HPPO and the terpene cyclase olcD catalyzes the cyclization of the terpenoid component, resulting in the formation of the tricyclic terpene moiety seen in predecaturin E. The cytochrome P450 monooxygenase then catalyzes the allylic oxidation of predecaturin E, which is followed by spirocylization with concomitant loss of one molecule of water to form decaturin E. Decaturin E is the substrate of the cytochrome P450 monooxygenase olcJ which hydroxylates it at the C-29 position to form decaturin F. The short-chain dehydrogenase/reductase olcF may catalyze the oxidation of decaturin F to generate the 29-hydroxyl-27-one intermediate, and subsequent hemiacetal formation probably leads to the formation of decaturin C. The dioxygenase olcK may be a peroxisomal enzyme that catalyzes the hydroxylation of decaturin C into decaturin A once decaturin C is shuttled into the peroxisome by the MFS transporter olcL. Finally the cytochrome P450 monooxygenase olcB catalyzes the oxidative rearrangement to yield 15-deoxyoxalicine B. In the absence of olcJ, decaturin E may be shunted to a pathway in which it is oxidized to a ketone, possibly by olcF, to form decaturin D, which undergoes further allylic oxidation to yield decaturin G. Moreover, in the absence of oclK or oclL, oclB can convert decaturin C into 15-deoxyoxalicine A. The chain is Terpene cyclase olcD from Penicillium canescens.